The following is a 700-amino-acid chain: Dipeptidyl aminopeptidase 1 (700 aa).

A signal peptide spans 1–27; it reads MAKRIFSVSFLLVLLNVLHICIKFSVA. Residues N52, N144, N265, N337, and N373 are each glycosylated (N-linked (GlcNAc...) asparagine). A propeptide spanning residues 210–369 is cleaved from the precursor; that stretch reads DNVNEIKHLD…SPKRELEINE (160 aa). Intrachain disulfides connect C395-C446 and C439-C478. C398 is a catalytic residue. The residue at position 416 (T416) is a Sulfothreonine. F450 and Y452 together coordinate chloride. N-linked (GlcNAc...) asparagine glycans are attached at residues N481, N490, and N507. Y549 contacts chloride. N615 carries N-linked (GlcNAc...) asparagine glycosylation. Residues H624 and N648 contribute to the active site. N667 is a glycosylation site (N-linked (GlcNAc...) asparagine).

It belongs to the peptidase C1 family. Monomer. Requires chloride as cofactor.

It localises to the vacuole lumen. It is found in the parasitophorous vacuole lumen. It catalyses the reaction Release of an N-terminal dipeptide, Xaa-Yaa-|-Zaa-, except when Xaa is Arg or Lys, or Yaa or Zaa is Pro.. Thiol protease that cleaves dipeptides from the N-terminus of protein substrates. Active against a broad range of dipeptide substrates composed of both polar and hydrophobic amino acids. Proline cannot occupy the P1 position and arginine or lysine cannot occupy the P2 position of the substrate. Involved in host hemoglobin degradation by generating dipeptides from hemoglobin-derived oligopeptides. The protein is Dipeptidyl aminopeptidase 1 of Plasmodium falciparum (isolate 3D7).